The sequence spans 633 residues: FAD-binding monooxygenase andJ (633 aa).

FAD is bound by residues 117–120, 129–130, and tyrosine 135; these read TWYW and DT. 127 to 129 provides a ligand contact to NADP(+); it reads MCD. NADP(+)-binding positions include 269-275 and 292-293; these read TGASAVQ and RT.

It belongs to the FAD-binding monooxygenase family. Requires FAD as cofactor.

Its pathway is secondary metabolite biosynthesis; terpenoid biosynthesis. In terms of biological role, FAD-binding monooxygenase; part of the gene cluster that mediates the biosynthesis of anditomin, a fungal meroterpenoid. The first step of the pathway is the synthesis of 3,5-dimethylorsellinic acid (DMOA) by the polyketide synthase andM. DMOA is then converted to the phthalide compound 5,7-dihydroxy-4,6-dimethylphthalide (DHDMP) by the cytochrome P450 monooxygenase andK, which is further prenylated by the prenyltransferase andD to yield farnesyl-DHDMP. Further epoxidation by the FAD-dependent monooxygenase andE leads to epoxyfarnesyl-DHDMP. The next step involves the terpene cyclase andB that converts epoxyfarnesyl-DHDMP into preandiloid A through opening of the epoxide ring followed by the cyclization of the farnesyl moiety. Preandiloid A is in turn oxidized at the C-3 hydroxyl group to yield preandiloid B by the dehydrogenase andC. The dioxygenase andA is solely responsible for the dehydrogenation of preandiloid B leading to the enone preandiloid C, as well as for the intriguing structural rearrangement to generate the bicyclo[2.2.2]octane core, transforming preandiloid C into andiconin. FAD-binding monooxygenase andJ then produces andilesin D which is reduced by dehydrogenase andI to yield andilesin A. Action of acetyltransferase andG followed by a spontaneous acetate elimination leads then to andilesin B, which is in turn substrate of the short chain dehydrogenase andH to yield andilesin C. Finally, the dioxygenase andF catalyzes the transformation of andilesin C to anditomin. The sequence is that of FAD-binding monooxygenase andJ from Emericella variicolor (Aspergillus stellatus).